We begin with the raw amino-acid sequence, 610 residues long: Menin (610 aa).

The interval 214–390 is interaction with FANCD2; that stretch reads GVAERSWLYL…SLLEAGEERP (177 aa). Disordered regions lie at residues 385-404 and 460-552; these read AGEERPGEQTQGTQSQGSAL and REAE…PVLT. Low complexity predominate over residues 393 to 402; it reads QTQGTQSQGS. A compositionally biased stretch (basic and acidic residues) spans 484 to 500; sequence RRESKPEEPPPPKKPAL. Serine 487 carries the phosphoserine modification. Pro residues-rich tracts occupy residues 512–521 and 537–548; these read PGPPRKPPGT and VPAPAASPPPEG. Phosphoserine is present on serine 543. A Phosphothreonine modification is found at threonine 594.

As to quaternary structure, component of the MLL-HCF complex, at least composed of KMT2A/MLL1, MEN1, ASH2L, RBBP5, DPY30, WDR5, HCFC1 and HCFC2. Component of the menin-associated histone methyltransferase complex, at least composed of KMT2B/MLL4, MEN1, ASH2L, RBBP5, DPY30 and WDR5. Interacts with POLR2B. Interacts with POLR2A phosphorylated at 'Ser-5', but not with the unphosphorylated, nor 'Ser-2' phosphorylated POLR2A forms. Interacts with FANCD2 and DBF4. Interacts with SMAD3, but not with SMAD2, nor SMAD4. Directly interacts with NFKB1, NFKB2 and RELA. Interacts with JUND (via MBM motif); inhibits the interaction of JUND with MAPK10 and the phosphorylation of JUND by MAP kinases MAPK8 and MAPK10. Interacts with KMT2A (via MBM motif). The KMT2A-MEN1 complex interacts with PSIP1 with a greater affinity as MEN1 enhances interaction of KMT2A with PSIP1.

It is found in the nucleus. Essential component of a MLL/SET1 histone methyltransferase (HMT) complex, a complex that specifically methylates 'Lys-4' of histone H3 (H3K4). Functions as a transcriptional regulator. Binds to the TERT promoter and represses telomerase expression. Plays a role in TGFB1-mediated inhibition of cell-proliferation, possibly regulating SMAD3 transcriptional activity. Represses JUND-mediated transcriptional activation on AP1 sites, as well as that mediated by NFKB subunit RELA. Positively regulates HOXC8 and HOXC6 gene expression. May be involved in normal hematopoiesis through the activation of HOXA9 expression. May be involved in DNA repair. The sequence is that of Menin (MEN1) from Bos taurus (Bovine).